The sequence spans 396 residues: MTTLNPYFGEFGGMYVPQILMPALKQLEEAFVSAQLDPEFQAEFQDLLKNYAGRPTALTLCQNLTKGTKTKLYLKREDLLHGGAHKTNQVLGQALLAKRMGKTEIIAETGAGQHGVASALACALLGLKCRIYMGAKDIERQSPNVFRMRLMGAEVIPVHSGSSTLKDACNEALRDWSGSYETAHYMLGTAAGPHPYPTIVREFQRMIGEETKAQMLAREGRLPDAVLACIGGGSNAIGMFADFIDEPGVGLIGVEPAGLGIETGQHGAPLKHGKVGIYFGMKSPMMQTSDGQIEESYSISAGLDFPSVGPQHAYLNSIGRADYVSVTDDEALDAFKALSCNEGIIPALESSHALAHALKMIKAEPEKEQILVVNLSGRGDKDIFTVHDILKARGEI.

The residue at position 86 (lysine 86) is an N6-(pyridoxal phosphate)lysine.

This sequence belongs to the TrpB family. As to quaternary structure, tetramer of two alpha and two beta chains. Pyridoxal 5'-phosphate is required as a cofactor.

The enzyme catalyses (1S,2R)-1-C-(indol-3-yl)glycerol 3-phosphate + L-serine = D-glyceraldehyde 3-phosphate + L-tryptophan + H2O. It functions in the pathway amino-acid biosynthesis; L-tryptophan biosynthesis; L-tryptophan from chorismate: step 5/5. Its function is as follows. The beta subunit is responsible for the synthesis of L-tryptophan from indole and L-serine. This chain is Tryptophan synthase beta chain, found in Yersinia enterocolitica serotype O:8 / biotype 1B (strain NCTC 13174 / 8081).